Reading from the N-terminus, the 99-residue chain is Large ribosomal subunit protein uL23 (99 aa).

This sequence belongs to the universal ribosomal protein uL23 family. Part of the 50S ribosomal subunit. Contacts protein L29, and trigger factor when it is bound to the ribosome.

Functionally, one of the early assembly proteins it binds 23S rRNA. One of the proteins that surrounds the polypeptide exit tunnel on the outside of the ribosome. Forms the main docking site for trigger factor binding to the ribosome. The sequence is that of Large ribosomal subunit protein uL23 from Hydrogenobaculum sp. (strain Y04AAS1).